Here is a 421-residue protein sequence, read N- to C-terminus: MAAISRAIKQELLEDLKPEMYLPPKSTRRRAKVKTEEKVDVKTLVKSKSKKRRAAKNELEENVEFVRRFAPRRPYQWRGRQVRALPRPGIPVVFTPGQRSGVASKRSYDEVYADEDVLDQSGNMINEFAYGKRVKMLTHKNPTPSQVPITPQEPIARPGEARLLPTVQVLAPRDSKHETMLPVTKSEGGDVKVENKGFEQITPQLGVQTVDIKVPVKRKSEVEDEILKRAKMEPFETTVKMEYSEQPQVEVFDTGVEPSSFFEVRSQARPIAVARKRRVPTVEVMEVQQSDHTAPTASAAPVANVIVGPHLSRRPSRWGPANAIYPDYVYHPSISAKKIMGPRPTGRVSRWGPANSIFPEVRLHPSMVSAVTRAAPRKSTKSRRRRRVRTRRAFVLPAGTKTGVMLPQNIRYHPSILFRRA.

The protein belongs to the adenoviridae core-capsid bridging protein family. Monomer. Homodimer. Exists in equilibrium between monomers and dimers in solution. Interacts with the histone-like nucleoprotein; this interactions bridge the virus core to the capsid. Interacts with core protein X; this interactions bridge the virus core to the capsid. Interacts with the endosome lysis protein VI; this interactions bridge the virus core to the capsid. Interacts with the peripentonal hexons. Interacts with host NPM1; this interaction might play a role in virus assembly.

It localises to the virion. The protein localises to the host nucleus. It is found in the host nucleolus. In terms of biological role, associates loosely with the viral DNA to form an outer shell around the nucleoprotein-DNA complex and links it with the capsid by binding the endosome lysis protein. Dissociates from the viral genome during entry. Might be involved in nuclear capsid assembly of the viral particles through its association with NPM1/nucleophosmin. This chain is Core-capsid bridging protein, found in Canine adenovirus serotype 1 (strain RI261) (CAdV-1).